Consider the following 1153-residue polypeptide: PPi-type phosphoenolpyruvate carboxykinase 2 (1153 aa).

Positions 1085–1131 (RQKLEVAKLNKDLAYLNKTIAEKPRLVETLNKQIAAVKEELQYVSSE) form a coiled coil.

This sequence belongs to the PPi-type phosphoenolpyruvate carboxykinase family. Monomer and trimer; forms heterotrimers with PEPCK1 and PEPCK3.

The protein resides in the cytoplasm. The protein localises to the cytosol. The enzyme catalyses oxaloacetate + diphosphate = phosphoenolpyruvate + phosphate + CO2. Its function is as follows. Inorganic pyrophosphate (PPi)-dependent phosphoenolpyruvate carboxykinase, which regulates the carbon flow of the central metabolism by fixing CO(2) to phosphoenolpyruvate to produce oxaloacetate. Can also produce pyruvate and diphosphate from phosphoenolpyruvate and phosphate. The chain is PPi-type phosphoenolpyruvate carboxykinase 2 from Entamoeba histolytica (strain ATCC 30459 / HM-1:IMSS / ABRM).